The primary structure comprises 192 residues: MGVTQENKVIARTVLGAFGGKPKVTKYWDDNKNSSIDILSVSDQPQEGITSYSTLGLSDHSINYEVNGTPLRIEIVAAMESASDIYANVLSTCAFNIINSNFTCAPGVIFKNVISMYDQETDMKHIMFVPPFLWEEDLELLEFSNKNVTWLMALPISEGELQVAEKHGSDYLQDLLESKQIDIFDIKRESVV.

In terms of assembly, probably interacts with cognate toxin YqcG but not with other non-cognate toxins. The interaction inhibits the toxic activity of YqcG.

It localises to the cytoplasm. Functionally, immunity component of one of 6 LXG toxin-immunity modules in this strain. They promote kin selection, mediate competition in biofilms, and drive spatial segregation of different strains, indicating that LXG toxins may help avoid warfare between strains in biofilms. Mediates intercellular competition during biofilm formation; disruption of the operon disadvantages the bacteria, but overexpression of the cognate immunity protein restores growth in competition with wild-type. In situ neutralizes the toxic effect of cognate toxin YqcG. Neutralizes the toxic activity of cognate toxin YqcG upon expression in E.coli. Does not have immunity protein activity on other LXG toxins. The protein is Immunity protein YqcF (yqcF) of Bacillus subtilis (strain 168).